The sequence spans 401 residues: Voltage-gated potassium channel subunit beta-1 (401 aa).

Residues threonine 90, tryptophan 91, glutamine 97, and aspartate 119 each coordinate NADP(+). Tyrosine 124 serves as the catalytic Proton donor/acceptor. Residues asparagine 192, serine 222, arginine 223, glutamine 248, tryptophan 277, serine 278, proline 279, leucine 280, alanine 281, cysteine 282, lysine 288, arginine 298, glycine 357, serine 359, glutamine 363, glutamate 366, and asparagine 367 each contribute to the NADP(+) site.

The protein belongs to the shaker potassium channel beta subunit family. In terms of assembly, homotetramer. Interaction with tetrameric potassium channel alpha subunits gives rise to a heterooctamer.

Its subcellular location is the cytoplasm. The protein resides in the membrane. It is found in the cell membrane. It carries out the reaction a primary alcohol + NADP(+) = an aldehyde + NADPH + H(+). The enzyme catalyses a secondary alcohol + NADP(+) = a ketone + NADPH + H(+). Functionally, regulatory subunit of the voltage-gated potassium (Kv) channels composed of pore-forming and potassium-conducting alpha subunits and of regulatory beta subunits. The beta-1/KCNAB1 cytoplasmic subunit mediates closure of delayed rectifier potassium channels by physically obstructing the pore via its N-terminal domain and increases the speed of channel closure for other family members. Promotes the inactivation of KCNA1, KCNA2, KCNA4, KCNA5 and KCNA6 alpha subunit-containing channels. Displays nicotinamide adenine dinucleotide phosphate (NADPH)-dependent aldoketoreductase activity by catalyzing the NADPH-dependent reduction of a variety of endogenous aldehydes and ketones. The binding of NADPH is required for efficient down-regulation of potassium channel activity. Oxidation of the bound NADPH restrains N-terminal domain from blocking the channel, thereby decreasing N-type inactivation of potassium channel activity. In Gallus gallus (Chicken), this protein is Voltage-gated potassium channel subunit beta-1 (KCNAB1).